The primary structure comprises 2813 residues: von Willebrand factor (2813 aa).

The N-terminal stretch at M1–C22 is a signal peptide. Positions A33–E201 constitute a VWFD 1 domain. 2 cysteine pairs are disulfide-bonded: C35–C162 and C57–C200. N99, N156, and N211 each carry an N-linked (GlcNAc...) asparagine glycan. The TIL 1 domain occupies C295–C348. The 175-residue stretch at G386–Q560 folds into the VWFD 2 domain. Disulfide bonds link C388–C524, C410–C559, and C432–C440. 2 consecutive TIL domains span residues C652–C707 and C776–C827. Residue N666 is glycosylated (N-linked (GlcNAc...) asparagine). Residues S764–E787 form an amino-terminal region. 3 disulfide bridges follow: C767–C808, C776–C804, and C810–C821. The E1 stretch occupies residues C788 to G833. The segment at R826–D853 is CX. Residue N857 is glycosylated (N-linked (GlcNAc...) asparagine). Positions A865–A1032 constitute a VWFD 3 domain. Disulfide bonds link C867–C996, C889–C1031, C898–C993, C914–C921, C1060–C1084, C1071–C1111, C1089–C1091, and C1126–C1130. The TIL 4 domain occupies Y1146–C1196. A glycan (N-linked (GlcNAc...) asparagine; atypical) is linked at N1147. 3 cysteine pairs are disulfide-bonded: C1149-C1169, C1153-C1165, and C1196-C1199. Residue N1231 is glycosylated (N-linked (GlcNAc...) asparagine). Residues C1234 and C1237 are joined by a disulfide bond. T1248, T1255, and T1256 each carry an O-linked (GalNAc...) threonine glycan. O-linked (GalNAc...) serine glycosylation is present at S1263. C1272 and C1458 are joined by a disulfide. In terms of domain architecture, VWFA 1; binding site for platelet glycoprotein Ib spans D1277 to I1453. O-linked (GalNAc...) threonine glycans are attached at residues T1468 and T1477. O-linked (GalNAc...) serine glycosylation is present at S1486. T1487 is a glycosylation site (O-linked (GalNAc...) threonine). Residues D1498–V1665 enclose the VWFA 2 domain. A glycan (N-linked (GlcNAc...) (complex) asparagine) is linked at N1515. N1574 carries N-linked (GlcNAc...) asparagine glycosylation. A disulfide bridge links C1669 with C1670. An O-linked (GalNAc...) threonine glycan is attached at T1679. 7 disulfides stabilise this stretch: C1686/C1872, C1879/C1904, C1899/C1940, C1927/C2088, C1950/C2085, C1972/C2123, and C1993/C2001. In terms of domain architecture, VWFA 3; main binding site for collagens type I and III spans D1691 to L1871. Residues C1948 to Q2124 form the VWFD 4 domain. Residues C2216 to D2261 are E2. N2223 and N2290 each carry an N-linked (GlcNAc...) asparagine glycan. The VWFC 1 domain occupies T2255 to D2328. T2298 carries an O-linked (GalNAc...) threonine glycan. N-linked (GlcNAc...) asparagine glycans are attached at residues N2357 and N2400. The VWFC 2 domain occupies K2429–L2495. Residues R2507–D2509 carry the Cell attachment site motif. N2546 and N2585 each carry an N-linked (GlcNAc...) asparagine glycan. Residues E2580–L2645 enclose the VWFC 3 domain. 4 cysteine pairs are disulfide-bonded: C2724–C2774, C2739–C2788, C2750–C2804, and C2754–C2806. One can recognise a CTCK domain in the interval C2724–S2812. Residue N2790 is glycosylated (N-linked (GlcNAc...) asparagine).

As to quaternary structure, multimeric. Interacts with F8. Post-translationally, all cysteine residues are involved in intrachain or interchain disulfide bonds. In terms of processing, N- and O-glycosylated. In terms of tissue distribution, plasma.

It localises to the secreted. It is found in the extracellular space. The protein resides in the extracellular matrix. Functionally, important in the maintenance of hemostasis, it promotes adhesion of platelets to the sites of vascular injury by forming a molecular bridge between sub-endothelial collagen matrix and platelet-surface receptor complex GPIb-IX-V. Also acts as a chaperone for coagulation factor VIII, delivering it to the site of injury, stabilizing its heterodimeric structure and protecting it from premature clearance from plasma. The chain is von Willebrand factor (VWF) from Homo sapiens (Human).